The primary structure comprises 825 residues: Breast cancer anti-estrogen resistance protein 3 homolog (825 aa).

A2 is subject to N-acetylalanine. Phosphoserine occurs at positions 32, 78, 83, 182, and 290. Positions 40–84 (EAYPDVSIHGTLPRKKKGPPPIRSCDSASHMGTLPHSKSPRQSSP) are disordered. The 100-residue stretch at 154-253 (WYHGRIPRQV…QSGAIIFQPI (100 aa)) folds into the SH2 domain. Positions 300 to 320 (DHSLPRGNLLRNKDKSGSQPA) are disordered. The residue at position 334 (K334) is an N6-methyllysine. Phosphoserine occurs at positions 358, 363, and 375. R442 is subject to Omega-N-methylarginine. Position 471 is a phosphoserine (S471). Residues 548–818 (DARVIAQHML…TALSRKLEPP (271 aa)) form the Ras-GEF domain. The interval 744–748 (LATAR) is mediates the interaction with BCAR1/p130CAS.

Part of a complex comprised of PTPRA, BCAR1, BCAR3 and SRC; the formation of the complex is dependent on integrin mediated-tyrosine phosphorylation of PTPRA. Within the complex, interacts (via SH2 domain) with PTPRA (when phosphorylated on 'Tyr-792'). Interacts (via Ras-GEF domain) with BCAR1. Interacts (via Ras-GEF domain) with NEDD9. Interacts with PTK2/FAK1. Interacts with PTPN1. Interacts (via SH2 domain) with EGFR (when tyrosine-phosphorylated). In terms of processing, phosphorylated on tyrosine residues.

It is found in the cytoplasm. The protein localises to the cell junction. The protein resides in the focal adhesion. In terms of biological role, acts as an adapter protein downstream of several growth factor receptors to promote cell proliferation, migration, and redistribution of actin fibers. Specifically involved in INS/insulin signaling pathway by mediating MAPK1/ERK2-MAPK3/ERK1 activation and DNA synthesis. Promotes insulin-mediated membrane ruffling. In response to vasoconstrictor peptide EDN1, involved in the activation of RAP1 downstream of PTK2B via interaction with phosphorylated BCAR1. Inhibits cell migration and invasion via regulation of TGFB-mediated matrix digestion, actin filament rearrangement, and inhibition of invadopodia activity. May inhibit TGFB/SMAD signaling, via facilitating BCAR1 and SMAD2 and/or SMAD3 interaction. Regulates EGF-induced DNA synthesis. Required for the maintenance of ocular lens morphology and structural integrity, potentially via regulation of focal adhesion complex signaling. Acts upstream of PTPRA to regulate the localization of BCAR1 and PTPRA to focal adhesions, via regulation of SRC-mediated phosphorylation of PTPRA. Positively regulates integrin-induced tyrosine phosphorylation of BCAR1. Acts as a guanine nucleotide exchange factor (GEF) for small GTPases RALA, RAP1A and RRAS. However, in a contrasting study, lacks GEF activity towards RAP1. This is Breast cancer anti-estrogen resistance protein 3 homolog from Rattus norvegicus (Rat).